The sequence spans 143 residues: Mite group 2 allergen Pso o 2 (143 aa).

Positions 1-17 are cleaved as a signal peptide; it reads MMKTLVVLAITLAVVSA. 3 disulfides stabilise this stretch: C25–C134, C38–C43, and C89–C94.

It belongs to the NPC2 family.

The protein localises to the secreted. This chain is Mite group 2 allergen Pso o 2 (ALLA), found in Psoroptes ovis (Sheep scab mite).